The following is a 693-amino-acid chain: E3 ubiquitin-protein ligase MARCHF7 (693 aa).

At M1 the chain carries N-acetylmethionine. 7 disordered regions span residues 1 to 43 (MESK…RDSS), 69 to 136 (ESEI…LGSF), 158 to 281 (LMDY…RRTT), 296 to 342 (FFSR…EGRA), 361 to 430 (LSQN…RDSN), 445 to 475 (AANR…RNPG), and 512 to 533 (WNST…PEKL). Polar residues-rich tracts occupy residues 14-36 (VQPS…LNDS), 95-105 (SCTNCASTSAG), 112-132 (LNTV…SSMV), 167-184 (DFTT…SYSQ), and 192-215 (AVST…QTVP). Low complexity predominate over residues 216–234 (SSRDSSRSSFRSHFSPRQS). The span at 236 to 267 (SFRNSSHPAFSYFSSRNETPTISNSERGSSQR) shows a compositional bias: polar residues. Residues 268–279 (PYRESSDNEGRR) show a composition bias toward basic and acidic residues. Residues 296 to 305 (FFSRRSSQDS) are compositionally biased toward low complexity. Residues 306–323 (LNTRSLSSENYISPRTLT) are compositionally biased toward polar residues. S318 carries the phosphoserine modification. Low complexity predominate over residues 324–337 (SQSRNNGTSSSSDV). S390 carries the phosphoserine modification. Residues 451–463 (ASGASSSAAAGGS) are compositionally biased toward low complexity. Over residues 517 to 533 (GKNDKAKSAPSRDPEKL) the composition is skewed to basic and acidic residues. The segment at 546-616 (DDEEEGDLCR…ELCKEKLQLN (71 aa)) adopts an RING-CH-type zinc-finger fold. Zn(2+) is bound by residues C554, C557, C572, C574, H582, C585, C606, and C609. Residue T688 is modified to Phosphothreonine. At S689 the chain carries Phosphoserine.

As to expression, expressed in brain, thymus, muscle and kidney.

The protein localises to the cytoplasm. The catalysed reaction is S-ubiquitinyl-[E2 ubiquitin-conjugating enzyme]-L-cysteine + [acceptor protein]-L-lysine = [E2 ubiquitin-conjugating enzyme]-L-cysteine + N(6)-ubiquitinyl-[acceptor protein]-L-lysine.. Its pathway is protein modification; protein ubiquitination. Its function is as follows. E3 ubiquitin-protein ligase which may specifically enhance the E2 activity of HIP2. E3 ubiquitin ligases accept ubiquitin from an E2 ubiquitin-conjugating enzyme in the form of a thioester and then directly transfer the ubiquitin to targeted substrates. May be involved in T-cell proliferation by regulating LIF secretion. May play a role in lysosome homeostasis. Promotes 'Lys-6', 'Lys-11' and 'Lys-63'-linked mixed polyubiquitination on ATG14 leading to the inhibition of autophagy by impairing the interaction between ATG14 and STX7. Participates in the dopamine-mediated negative regulation of the NLRP3 inflammasome by promoting its uibiquitination and subsequent degradation. This chain is E3 ubiquitin-protein ligase MARCHF7 (Marchf7), found in Mus musculus (Mouse).